A 163-amino-acid chain; its full sequence is E1B protein, small T-antigen (163 aa).

This sequence belongs to the adenoviridae E1B 19 kDa protein family.

The protein localises to the host cell membrane. Its subcellular location is the host nucleus envelope. The protein resides in the host nucleus lamina. Putative adenovirus Bcl-2 homolog that inhibits apoptosis induced by TNF or FAS pathways, as well as p53-mediated apoptosis. Without E1B 19K function, virus production is compromised because of premature death of host cell. Interacts with Bax protein in cell lysates. This Human adenovirus A serotype 12 (HAdV-12) protein is E1B protein, small T-antigen.